The sequence spans 515 residues: Cytochrome P450 1A2 (515 aa).

A glycan (O-linked (GlcNAc) serine) is linked at Ser-69. Phe-226 is a binding site for substrate. Cys-458 contacts heme.

The protein belongs to the cytochrome P450 family. In terms of assembly, interacts with PGRMC1; the interaction requires PGRMC1 homodimerization. Heme is required as a cofactor.

It is found in the endoplasmic reticulum membrane. The protein resides in the microsome membrane. The enzyme catalyses an organic molecule + reduced [NADPH--hemoprotein reductase] + O2 = an alcohol + oxidized [NADPH--hemoprotein reductase] + H2O + H(+). The catalysed reaction is 17beta-estradiol + reduced [NADPH--hemoprotein reductase] + O2 = 2-hydroxy-17beta-estradiol + oxidized [NADPH--hemoprotein reductase] + H2O + H(+). It catalyses the reaction 17beta-estradiol + reduced [NADPH--hemoprotein reductase] + O2 = 4-hydroxy-17beta-estradiol + oxidized [NADPH--hemoprotein reductase] + H2O + H(+). It carries out the reaction estrone + reduced [NADPH--hemoprotein reductase] + O2 = 2-hydroxyestrone + oxidized [NADPH--hemoprotein reductase] + H2O + H(+). The enzyme catalyses estrone + reduced [NADPH--hemoprotein reductase] + O2 = 4-hydroxyestrone + oxidized [NADPH--hemoprotein reductase] + H2O + H(+). The catalysed reaction is cholesterol + reduced [NADPH--hemoprotein reductase] + O2 = 25-hydroxycholesterol + oxidized [NADPH--hemoprotein reductase] + H2O + H(+). It catalyses the reaction all-trans-retinol + reduced [NADPH--hemoprotein reductase] + O2 = all-trans-retinal + oxidized [NADPH--hemoprotein reductase] + 2 H2O + H(+). It carries out the reaction all-trans-retinal + reduced [NADPH--hemoprotein reductase] + O2 = all-trans-retinoate + oxidized [NADPH--hemoprotein reductase] + H2O + 2 H(+). The enzyme catalyses (5Z,8Z,11Z,14Z)-eicosatetraenoate + reduced [NADPH--hemoprotein reductase] + O2 = (14R,15S)-epoxy-(5Z,8Z,11Z)-eicosatrienoate + oxidized [NADPH--hemoprotein reductase] + H2O + H(+). The catalysed reaction is (5Z,8Z,11Z,14Z)-eicosatetraenoate + reduced [NADPH--hemoprotein reductase] + O2 = (14S,15R)-epoxy-(5Z,8Z,11Z)-eicosatrienoate + oxidized [NADPH--hemoprotein reductase] + H2O + H(+). It catalyses the reaction (5Z,8Z,11Z,14Z,17Z)-eicosapentaenoate + reduced [NADPH--hemoprotein reductase] + O2 = (17R,18S)-epoxy-(5Z,8Z,11Z,14Z)-eicosatetraenoate + oxidized [NADPH--hemoprotein reductase] + H2O + H(+). It carries out the reaction (4Z,7Z,10Z,13Z,16Z,19Z)-docosahexaenoate + reduced [NADPH--hemoprotein reductase] + O2 = (19R,20S)-epoxy-(4Z,7Z,10Z,13Z,16Z)-docosapentaenoate + oxidized [NADPH--hemoprotein reductase] + H2O + H(+). The enzyme catalyses (5S)-hydroperoxy-(6E,8Z,11Z,14Z)-eicosatetraenoate = 5-oxo-(6E,8Z,11Z,14Z)-eicosatetraenoate + H2O. The catalysed reaction is (12S)-hydroperoxy-(5Z,8Z,10E,14Z)-eicosatetraenoate = 12-oxo-(5Z,8Z,10E,14Z)-eicosatetraenoate + H2O. It catalyses the reaction (15S)-hydroperoxy-(5Z,8Z,11Z,13E)-eicosatetraenoate = 15-oxo-(5Z,8Z,11Z,13E)-eicosatetraenoate + H2O. It carries out the reaction (13S)-hydroperoxy-(9Z,11E)-octadecadienoate = 13-oxo-(9Z,11E)-octadecadienoate + H2O. The enzyme catalyses (5Z,8Z,11Z,14Z)-eicosatetraenoate + reduced [NADPH--hemoprotein reductase] + O2 = 13-hydroxy-(5Z,8Z,11Z,14Z)-eicosatetraenoate + oxidized [NADPH--hemoprotein reductase] + H2O + H(+). The catalysed reaction is (5Z,8Z,11Z,14Z)-eicosatetraenoate + reduced [NADPH--hemoprotein reductase] + O2 = 19-hydroxy-(5Z,8Z,11Z,14Z)-eicosatetraenoate + oxidized [NADPH--hemoprotein reductase] + H2O + H(+). It catalyses the reaction (9Z,12Z)-octadecadienoate + reduced [NADPH--hemoprotein reductase] + O2 = 11-hydroxy-(9Z,12Z)-octadecadienoate + oxidized [NADPH--hemoprotein reductase] + H2O + H(+). Its pathway is cofactor metabolism; retinol metabolism. It functions in the pathway steroid metabolism; cholesterol metabolism. It participates in lipid metabolism; arachidonate metabolism. Its function is as follows. A cytochrome P450 monooxygenase involved in the metabolism of various endogenous substrates, including fatty acids, steroid hormones and vitamins. Mechanistically, uses molecular oxygen inserting one oxygen atom into a substrate, and reducing the second into a water molecule, with two electrons provided by NADPH via cytochrome P450 reductase (NADPH--hemoprotein reductase). Catalyzes the hydroxylation of carbon-hydrogen bonds. Exhibits high catalytic activity for the formation of hydroxyestrogens from estrone (E1) and 17beta-estradiol (E2), namely 2-hydroxy E1 and E2. Metabolizes cholesterol toward 25-hydroxycholesterol, a physiological regulator of cellular cholesterol homeostasis. May act as a major enzyme for all-trans retinoic acid biosynthesis in the liver. Catalyzes two successive oxidative transformation of all-trans retinol to all-trans retinal and then to the active form all-trans retinoic acid. Primarily catalyzes stereoselective epoxidation of the last double bond of polyunsaturated fatty acids (PUFA), displaying a strong preference for the (R,S) stereoisomer. Catalyzes bisallylic hydroxylation and omega-1 hydroxylation of PUFA. May also participate in eicosanoids metabolism by converting hydroperoxide species into oxo metabolites (lipoxygenase-like reaction, NADPH-independent). Plays a role in the oxidative metabolism of xenobiotics. Catalyzes the N-hydroxylation of heterocyclic amines and the O-deethylation of phenacetin. Metabolizes caffeine via N3-demethylation. The polypeptide is Cytochrome P450 1A2 (CYP1A2) (Cavia porcellus (Guinea pig)).